Reading from the N-terminus, the 296-residue chain is NAD kinase (296 aa).

Asp-73 serves as the catalytic Proton acceptor. Residues 73-74 (DG), Lys-78, 151-152 (NE), Arg-178, Asp-180, and 191-196 (TAHAMS) each bind NAD(+).

The protein belongs to the NAD kinase family. A divalent metal cation serves as cofactor.

It localises to the cytoplasm. The enzyme catalyses NAD(+) + ATP = ADP + NADP(+) + H(+). In terms of biological role, involved in the regulation of the intracellular balance of NAD and NADP, and is a key enzyme in the biosynthesis of NADP. Catalyzes specifically the phosphorylation on 2'-hydroxyl of the adenosine moiety of NAD to yield NADP. This is NAD kinase from Francisella tularensis subsp. mediasiatica (strain FSC147).